Here is an 890-residue protein sequence, read N- to C-terminus: Alanine--tRNA ligase (890 aa).

4 residues coordinate Zn(2+): His-568, His-572, Cys-680, and His-684.

It belongs to the class-II aminoacyl-tRNA synthetase family. Zn(2+) is required as a cofactor.

It is found in the cytoplasm. It catalyses the reaction tRNA(Ala) + L-alanine + ATP = L-alanyl-tRNA(Ala) + AMP + diphosphate. Functionally, catalyzes the attachment of alanine to tRNA(Ala) in a two-step reaction: alanine is first activated by ATP to form Ala-AMP and then transferred to the acceptor end of tRNA(Ala). Also edits incorrectly charged Ser-tRNA(Ala) and Gly-tRNA(Ala) via its editing domain. This is Alanine--tRNA ligase from Psychrobacter cryohalolentis (strain ATCC BAA-1226 / DSM 17306 / VKM B-2378 / K5).